Here is a 359-residue protein sequence, read N- to C-terminus: ATPase ASNA1 homolog (359 aa).

23–30 (KGGVGKTT) contributes to the ATP binding site. Asp-63 is an active-site residue. ATP contacts are provided by Glu-252 and Asn-279. Zn(2+)-binding residues include Cys-291 and Cys-294.

Belongs to the arsA ATPase family. In terms of assembly, homodimer.

Its subcellular location is the cytoplasm. It is found in the endoplasmic reticulum. Its function is as follows. ATPase required for the post-translational delivery of tail-anchored (TA) proteins to the endoplasmic reticulum. Recognizes and selectively binds the transmembrane domain of TA proteins in the cytosol. This complex then targets to the endoplasmic reticulum by membrane-bound receptors, where the tail-anchored protein is released for insertion. This process is regulated by ATP binding and hydrolysis. ATP binding drives the homodimer towards the closed dimer state, facilitating recognition of newly synthesized TA membrane proteins. ATP hydrolysis is required for insertion. Subsequently, the homodimer reverts towards the open dimer state, lowering its affinity for the membrane-bound receptor, and returning it to the cytosol to initiate a new round of targeting. The protein is ATPase ASNA1 homolog of Trypanosoma cruzi (strain CL Brener).